Here is a 176-residue protein sequence, read N- to C-terminus: Translation initiation factor IF-3 (176 aa).

The protein belongs to the IF-3 family. As to quaternary structure, monomer.

The protein resides in the cytoplasm. In terms of biological role, IF-3 binds to the 30S ribosomal subunit and shifts the equilibrium between 70S ribosomes and their 50S and 30S subunits in favor of the free subunits, thus enhancing the availability of 30S subunits on which protein synthesis initiation begins. In Streptococcus agalactiae serotype Ia (strain ATCC 27591 / A909 / CDC SS700), this protein is Translation initiation factor IF-3.